A 347-amino-acid chain; its full sequence is GMP reductase (347 aa).

An NADP(+)-binding site is contributed by 108–131 (ADFEKTVQILALNPALNFVCIDVA). Residues Gly-181 and Gly-183 each coordinate K(+). Residue Cys-186 is the Thioimidate intermediate of the active site. 216-239 (IVSDGGCTMPGDVAKAFGGGADFV) is a binding site for NADP(+).

It belongs to the IMPDH/GMPR family. GuaC type 1 subfamily. As to quaternary structure, homotetramer.

It catalyses the reaction IMP + NH4(+) + NADP(+) = GMP + NADPH + 2 H(+). Catalyzes the irreversible NADPH-dependent deamination of GMP to IMP. It functions in the conversion of nucleobase, nucleoside and nucleotide derivatives of G to A nucleotides, and in maintaining the intracellular balance of A and G nucleotides. The polypeptide is GMP reductase (Salmonella choleraesuis (strain SC-B67)).